A 445-amino-acid chain; its full sequence is RNA-binding protein asd-2 (445 aa).

Residues 22–63 form a disordered region; sequence TVIPPPPNDSGHEFIGPSSGPPQVTITPSGVQSGSANGVSTS. Positions 42–63 are enriched in polar residues; it reads PPQVTITPSGVQSGSANGVSTS. The qua1 domain stretch occupies residues 71–128; that stretch reads EYLSQLLKDKKQLAAFPNVFHHLERLADEEINKVRVVLFQCEFSKESAPLPDAEGDST. The KH domain maps to 145–171; the sequence is NFVGRILGPRGMTAKQLEQETGCKIMV. Positions 230–253 are qua2 domain; involved in RNA binding; the sequence is APEGEDDLKRKQLMELAIINGTYR.

As to quaternary structure, interacts with sup-12; in the presence of RNA, but with weak affinity in the absence of RNA. Isoform b: Expressed in the hypodermis and pharyngeal muscles. Isoform c: Expressed in body wall muscles and phayngeal muscles.

Its subcellular location is the nucleus. In terms of biological role, RNA-binding protein that binds to the 5'-NACUAAY-N(1,20)-UAAY-3' consensus sequence in pre-mRNA introns to promote alternative splicing. Required for mutually exclusive alternative splicing where it modulates the switch between mutually exclusive exons during pre-mRNA maturation. Involved in muscle-specific gene expression regulating the alternative splicing of genes such as let-2 and unc-60 to ensure that their respective isoforms are expressed in muscle. Promotes the removal of intron 10 from let-2 pre-mRNA to allow for the exclusive expression of the muscle-specific let-2 isoform (as opposed to the non-muscle-specific isoform expressed in embryos) in body wall muscles during late larval and adult stages of development. Binds cooperatively with RNA-binding protein sup-12 to intron 1A of the unc-60 pre-mRNA to promote alternative splicing and expression of the muscle specific isoform of unc-60. In Caenorhabditis elegans, this protein is RNA-binding protein asd-2.